A 402-amino-acid chain; its full sequence is uncharacterized protein (402 aa).

An N-terminal signal peptide occupies residues 1-44 (MLEKNLLPEILLAIHMPLNKGLTRVKAIVIIIVVIIAVIAGVVG). The disordered stretch occupies residues 53-79 (NSVTTSSSSTTTSSSLSSTSISSSTTN).

This sequence belongs to the bacterial solute-binding protein 1 family. WtpA subfamily.

This is an uncharacterized protein from Saccharolobus solfataricus (strain ATCC 35092 / DSM 1617 / JCM 11322 / P2) (Sulfolobus solfataricus).